A 629-amino-acid polypeptide reads, in one-letter code: MNRYTTIKQLGDGTYGSVLLGRSIESGELIAIKKMKRKFYSWEECMNLREVKSLKKLNHANIVKLKEVIRENDHLYFIFEYMKENLYQLIKERNKLFPESAIRNIMYQILQGLAFIHKHGFFHRDLKPENLLCMGPELVKIADFGLAREIRSRPPYTDYVSTRWYRAPEVLLRSTNYSSPIDVWAVGCIMAEVYTLRPLFPGASEIDTIFKICQVLGTPKKTDWPEGYQLSSAMNFIWPQCIPNNLKTLIPNASSEAIQLLRDLLQWDPKKRPTASQALRYPYFQIGHPLGISTQDSGKPQKDVQDKTGPPPYVKPAPPAQAPTKAHTLISSRPNQASQPHQHFVYPYKGEASRTEQLSHVQEGQPNPPFFPSLHNKNLPPKILAGLEQKSGDMKPKSRRRWGLISRSTKGSDDWADLADLDFSSSLTRIDVKNKKRQSDDPLCRFESVLDLKPSEPVGTGTSVSTQASSQRRDTPTLQSTAKQHYLKHSRYLPGINIRNGVLPNPGKDFLPSSSWSSSGLSGKSSGTVSVVSKITSVGSGSTSSTGLTGSYIPSFLKKEVGSVMQRVQLAPLAAPSPGYSSLKAVRPHPGRPFFHTQPRSTPGLIPRPPAVQPVHGRIDWSSKYPSRR.

The 281-residue stretch at 4-284 (YTTIKQLGDG…ASQALRYPYF (281 aa)) folds into the Protein kinase domain. ATP is bound by residues 10–18 (LGDGTYGSV) and lysine 33. The active-site Proton acceptor is the aspartate 125. Threonine 157 carries the phosphothreonine modification. Position 159 is a phosphotyrosine (tyrosine 159). Position 161 is a phosphoserine (serine 161). 3 disordered regions span residues 292-322 (ISTQ…PAQA), 454-482 (PSEP…QSTA), and 579-629 (GYSS…PSRR). Residues 309-321 (GPPPYVKPAPPAQ) are compositionally biased toward pro residues. Residues 460–482 (TGTSVSTQASSQRRDTPTLQSTA) are compositionally biased toward polar residues.

It belongs to the protein kinase superfamily. CMGC Ser/Thr protein kinase family. CDC2/CDKX subfamily. Mg(2+) serves as cofactor. Autophosphorylated on serine and threonine residues. Phosphorylation at Thr-157 increases kinase activity. As to expression, expressed in embryonic heart from day 11. Highly expressed in the uterus and at lower levels in brain, heart, lung, kidney, skeletal muscle, ovary and liver in adult tissues.

The protein localises to the cytoplasm. The protein resides in the cell projection. It is found in the cilium. Its subcellular location is the nucleus. It localises to the cytoskeleton. The protein localises to the cilium basal body. The catalysed reaction is L-seryl-[protein] + ATP = O-phospho-L-seryl-[protein] + ADP + H(+). It carries out the reaction L-threonyl-[protein] + ATP = O-phospho-L-threonyl-[protein] + ADP + H(+). Its function is as follows. Required for ciliogenesis, particularly in neuronal and retinal progenitor cells. Phosphorylates KIF3A. Involved in the control of ciliary length. Regulates the ciliary localization of SHH pathway components as well as the localization of IFT components at ciliary tips. May play a role in cardiac development. Regulates intraflagellar transport (IFT) speed and negatively regulates cilium length in a cAMP and mTORC1 signaling-dependent manner and this regulation requires its kinase activity. The protein is Serine/threonine-protein kinase ICK (Cilk1) of Rattus norvegicus (Rat).